Reading from the N-terminus, the 226-residue chain is Lipoprotein-releasing system ATP-binding protein LolD (226 aa).

One can recognise an ABC transporter domain in the interval 5-226 (LRCEKISKFY…MADGVLREAS (222 aa)). 41–48 (GSSGSGKS) is an ATP binding site.

The protein belongs to the ABC transporter superfamily. Lipoprotein translocase (TC 3.A.1.125) family. In terms of assembly, the complex is composed of two ATP-binding proteins (LolD) and two transmembrane proteins (LolC and LolE).

It is found in the cell inner membrane. In terms of biological role, part of the ABC transporter complex LolCDE involved in the translocation of mature outer membrane-directed lipoproteins, from the inner membrane to the periplasmic chaperone, LolA. Responsible for the formation of the LolA-lipoprotein complex in an ATP-dependent manner. This Haemophilus ducreyi (strain 35000HP / ATCC 700724) protein is Lipoprotein-releasing system ATP-binding protein LolD.